A 317-amino-acid polypeptide reads, in one-letter code: Methionyl-tRNA formyltransferase (317 aa).

Position 110–113 (110–113 (SLLP)) interacts with (6S)-5,6,7,8-tetrahydrofolate.

This sequence belongs to the Fmt family.

The enzyme catalyses L-methionyl-tRNA(fMet) + (6R)-10-formyltetrahydrofolate = N-formyl-L-methionyl-tRNA(fMet) + (6S)-5,6,7,8-tetrahydrofolate + H(+). Functionally, attaches a formyl group to the free amino group of methionyl-tRNA(fMet). The formyl group appears to play a dual role in the initiator identity of N-formylmethionyl-tRNA by promoting its recognition by IF2 and preventing the misappropriation of this tRNA by the elongation apparatus. The sequence is that of Methionyl-tRNA formyltransferase from Bacillus subtilis (strain 168).